Reading from the N-terminus, the 298-residue chain is Glutamyl-Q tRNA(Asp) synthetase (298 aa).

L-glutamate-binding positions include 9 to 13 (RFAPS) and Glu45. A 'HIGH' region motif is present at residues 12-22 (PSPSGELHFGS). 4 residues coordinate Zn(2+): Cys101, Cys103, Tyr115, and Cys119. Residues Tyr172 and Arg190 each contribute to the L-glutamate site. The 'KMSKS' region motif lies at 228–232 (KLSKQ). ATP is bound at residue Lys231.

It belongs to the class-I aminoacyl-tRNA synthetase family. GluQ subfamily. Zn(2+) serves as cofactor.

Functionally, catalyzes the tRNA-independent activation of glutamate in presence of ATP and the subsequent transfer of glutamate onto a tRNA(Asp). Glutamate is transferred on the 2-amino-5-(4,5-dihydroxy-2-cyclopenten-1-yl) moiety of the queuosine in the wobble position of the QUC anticodon. In Salmonella typhi, this protein is Glutamyl-Q tRNA(Asp) synthetase.